The chain runs to 151 residues: Multiprotein-bridging factor 1 (151 aa).

Residues Met-1–Gln-32 are disordered. The HTH cro/C1-type domain occupies Ile-86–Lys-140. Residues Gln-97 to Ala-116 constitute a DNA-binding region (H-T-H motif).

It belongs to the MBF1 family.

Its function is as follows. Transcriptional coactivator that stimulates GCN4-dependent transcriptional activity by bridging the DNA-binding region of GCN4 and TBP (SPT15), thereby recruiting TBP to GCN4-bound promoters. Involved in induction of the ribosome quality control (RQC) pathway; a pathway that degrades nascent peptide chains during problematic translation. Required to prevent stalled ribosomes from frameshifting. This is Multiprotein-bridging factor 1 (MBF1) from Candida albicans (strain SC5314 / ATCC MYA-2876) (Yeast).